We begin with the raw amino-acid sequence, 490 residues long: UDP-N-acetylmuramate--L-alanine ligase (490 aa).

Position 126 to 132 (126 to 132 (GTHGKTT)) interacts with ATP.

The protein belongs to the MurCDEF family.

It is found in the cytoplasm. It carries out the reaction UDP-N-acetyl-alpha-D-muramate + L-alanine + ATP = UDP-N-acetyl-alpha-D-muramoyl-L-alanine + ADP + phosphate + H(+). It functions in the pathway cell wall biogenesis; peptidoglycan biosynthesis. Cell wall formation. The chain is UDP-N-acetylmuramate--L-alanine ligase from Baumannia cicadellinicola subsp. Homalodisca coagulata.